Reading from the N-terminus, the 473-residue chain is Photosystem II CP43 reaction center protein (473 aa).

Positions methionine 1–glutamate 14 are excised as a propeptide. Threonine 15 carries the post-translational modification N-acetylthreonine. A Phosphothreonine modification is found at threonine 15. Helical transmembrane passes span leucine 69 to alanine 93, leucine 134 to asparagine 155, lysine 178 to threonine 200, lysine 255 to serine 275, and tryptophan 291 to alanine 312. Glutamate 367 contributes to the [CaMn4O5] cluster binding site. A helical membrane pass occupies residues arginine 447–proline 471.

This sequence belongs to the PsbB/PsbC family. PsbC subfamily. As to quaternary structure, PSII is composed of 1 copy each of membrane proteins PsbA, PsbB, PsbC, PsbD, PsbE, PsbF, PsbH, PsbI, PsbJ, PsbK, PsbL, PsbM, PsbT, PsbX, PsbY, PsbZ, Psb30/Ycf12, at least 3 peripheral proteins of the oxygen-evolving complex and a large number of cofactors. It forms dimeric complexes. Requires Binds multiple chlorophylls and provides some of the ligands for the Ca-4Mn-5O cluster of the oxygen-evolving complex. It may also provide a ligand for a Cl- that is required for oxygen evolution. PSII binds additional chlorophylls, carotenoids and specific lipids. as cofactor.

The protein localises to the plastid. The protein resides in the chloroplast thylakoid membrane. One of the components of the core complex of photosystem II (PSII). It binds chlorophyll and helps catalyze the primary light-induced photochemical processes of PSII. PSII is a light-driven water:plastoquinone oxidoreductase, using light energy to abstract electrons from H(2)O, generating O(2) and a proton gradient subsequently used for ATP formation. The protein is Photosystem II CP43 reaction center protein of Chloranthus spicatus (Chulantree).